Here is a 177-residue protein sequence, read N- to C-terminus: ATP-dependent protease subunit HslV (177 aa).

Residue Thr-7 is part of the active site. Gly-162, Cys-165, and Thr-168 together coordinate Na(+).

It belongs to the peptidase T1B family. HslV subfamily. A double ring-shaped homohexamer of HslV is capped on each side by a ring-shaped HslU homohexamer. The assembly of the HslU/HslV complex is dependent on binding of ATP.

The protein localises to the cytoplasm. The enzyme catalyses ATP-dependent cleavage of peptide bonds with broad specificity.. With respect to regulation, allosterically activated by HslU binding. Its function is as follows. Protease subunit of a proteasome-like degradation complex believed to be a general protein degrading machinery. This is ATP-dependent protease subunit HslV from Persephonella marina (strain DSM 14350 / EX-H1).